The sequence spans 230 residues: Cytidylate kinase (230 aa).

14-22 (GPSGVGKSS) contacts ATP.

It belongs to the cytidylate kinase family. Type 1 subfamily.

The protein localises to the cytoplasm. The catalysed reaction is CMP + ATP = CDP + ADP. It catalyses the reaction dCMP + ATP = dCDP + ADP. This chain is Cytidylate kinase, found in Buchnera aphidicola subsp. Baizongia pistaciae (strain Bp).